Consider the following 697-residue polypeptide: tRNA 5-methylaminomethyl-2-thiouridine biosynthesis bifunctional protein MnmC (697 aa).

The tRNA (mnm(5)s(2)U34)-methyltransferase stretch occupies residues 1–269 (MNKTPLLSVS…LRQQLQQQFA (269 aa)). Residues 287–697 (IGGGIASASL…RKLLKGKALM (411 aa)) form an FAD-dependent cmnm(5)s(2)U34 oxidoreductase region.

In the N-terminal section; belongs to the methyltransferase superfamily. tRNA (mnm(5)s(2)U34)-methyltransferase family. This sequence in the C-terminal section; belongs to the DAO family. FAD serves as cofactor.

The protein localises to the cytoplasm. The enzyme catalyses 5-aminomethyl-2-thiouridine(34) in tRNA + S-adenosyl-L-methionine = 5-methylaminomethyl-2-thiouridine(34) in tRNA + S-adenosyl-L-homocysteine + H(+). Its function is as follows. Catalyzes the last two steps in the biosynthesis of 5-methylaminomethyl-2-thiouridine (mnm(5)s(2)U) at the wobble position (U34) in tRNA. Catalyzes the FAD-dependent demodification of cmnm(5)s(2)U34 to nm(5)s(2)U34, followed by the transfer of a methyl group from S-adenosyl-L-methionine to nm(5)s(2)U34, to form mnm(5)s(2)U34. The sequence is that of tRNA 5-methylaminomethyl-2-thiouridine biosynthesis bifunctional protein MnmC from Shewanella frigidimarina (strain NCIMB 400).